Here is a 1940-residue protein sequence, read N- to C-terminus: Cilia- and flagella-associated protein 74 (1940 aa).

The segment at 52–90 (GSPAVTLRRAKAAAAANGTSSPGIRGSPSPARGPGGRLP) is disordered. A compositionally biased stretch (low complexity) spans 63–90 (AAAAANGTSSPGIRGSPSPARGPGGRLP). Residues 100-159 (ANVEQLKRRLQTVVAEVEGHQQRYDKVLLEANKATDLVHSMEAEIESLYVEAEELARRVP) adopt a coiled-coil conformation. Disordered stretches follow at residues 512 to 548 (VAGL…QSLT), 1159 to 1336 (SPHV…AAAE), 1373 to 1418 (PQSQ…AAPP), 1714 to 1737 (AGDK…GASK), and 1894 to 1940 (PGSR…KKAV). Residues 535–548 (SLTQQLAATQQSLT) are compositionally biased toward low complexity. The span at 1205–1220 (DGGGGGAMANGNGSGG) shows a compositional bias: gly residues. Residues 1227–1236 (DGEPEDGEGD) show a composition bias toward acidic residues. Residues 1260–1271 (GRGGRGGRGGAA) are compositionally biased toward gly residues. Residues 1272-1282 (GEDEDEDEDAG) show a composition bias toward acidic residues. The span at 1287 to 1304 (RGKSSSSSKASSGRRSSS) shows a compositional bias: low complexity. Over residues 1321–1335 (VPDDDDADAEAEAAA) the composition is skewed to acidic residues. The segment covering 1373-1414 (PQSQNPTPSQSQSGQAPAASAPSDGASGAAAAAETAASSGPA) has biased composition (low complexity). 2 stretches are compositionally biased toward pro residues: residues 1720–1731 (TPAPGIKPPATP) and 1896–1912 (SRPP…PAPE). Residues 1913-1929 (PVAASGPGAGAAGVKKL) are compositionally biased toward low complexity. Residues 1930–1940 (VPPPSPPKKAV) are compositionally biased toward pro residues.

The protein belongs to the CFAP74 family. As to quaternary structure, part of the PDCP1 complex composed of CFAP46, CFAP54, CFAP74 and CFAP221; the PDCP1 complex binds calmodulin.

The protein localises to the cytoplasm. It is found in the cytoskeleton. Its subcellular location is the cilium axoneme. Its function is as follows. As part of the central apparatus of the cilium axoneme may play a role in cilium movement and thereby cell motility. In Chlamydomonas reinhardtii (Chlamydomonas smithii), this protein is Cilia- and flagella-associated protein 74.